A 317-amino-acid polypeptide reads, in one-letter code: Transaldolase (317 aa).

Catalysis depends on K126, which acts as the Schiff-base intermediate with substrate.

It belongs to the transaldolase family. Type 1 subfamily. As to quaternary structure, homodimer.

The protein localises to the cytoplasm. It catalyses the reaction D-sedoheptulose 7-phosphate + D-glyceraldehyde 3-phosphate = D-erythrose 4-phosphate + beta-D-fructose 6-phosphate. It participates in carbohydrate degradation; pentose phosphate pathway; D-glyceraldehyde 3-phosphate and beta-D-fructose 6-phosphate from D-ribose 5-phosphate and D-xylulose 5-phosphate (non-oxidative stage): step 2/3. Its function is as follows. Transaldolase is important for the balance of metabolites in the pentose-phosphate pathway. This is Transaldolase from Burkholderia pseudomallei (strain 1710b).